The following is a 363-amino-acid chain: Pyrimidine monooxygenase RutA (363 aa).

FMN contacts are provided by residues 49–50, asparagine 115, glutamate 124, 140–141, and serine 190; these read IK and RY.

Belongs to the NtaA/SnaA/DszA monooxygenase family. RutA subfamily.

The enzyme catalyses uracil + FMNH2 + NADH + O2 = (Z)-3-ureidoacrylate + FMN + NAD(+) + H2O + H(+). It catalyses the reaction thymine + FMNH2 + NADH + O2 = (Z)-2-methylureidoacrylate + FMN + NAD(+) + H2O + H(+). Catalyzes the pyrimidine ring opening between N-3 and C-4 by an unusual flavin hydroperoxide-catalyzed mechanism, adding oxygen atoms in the process to yield ureidoacrylate peracid, that immediately reacts with FMN forming ureidoacrylate and FMN-N(5)-oxide. The FMN-N(5)-oxide reacts spontaneously with NADH to produce FMN. Requires the flavin reductase RutF to regenerate FMN in vivo. The polypeptide is Pyrimidine monooxygenase RutA (Klebsiella variicola (strain At-22)).